The chain runs to 124 residues: Cholera enterotoxin subunit B (124 aa).

Residues 1–21 form the signal peptide; that stretch reads MIKLKFGVFFTVLLSSAYAHG. Cys-30 and Cys-107 are oxidised to a cystine.

In terms of assembly, the holotoxin (choleragen) consists of a pentameric ring of B subunits whose central pore is occupied by the A subunit. The A subunit contains two chains, A1 and A2, linked by a disulfide bridge.

The protein localises to the secreted. It is found in the host cell membrane. Functionally, the B subunit pentameric ring directs the A subunit to its target by binding to the GM1 gangliosides present on the surface of the intestinal epithelial cells. It can bind five GM1 gangliosides. It has no toxic activity by itself. This is Cholera enterotoxin subunit B (ctxB) from Vibrio cholerae serotype O1 (strain ATCC 39315 / El Tor Inaba N16961).